Here is a 157-residue protein sequence, read N- to C-terminus: Transcription antitermination protein NusB (157 aa).

The protein belongs to the NusB family.

Its function is as follows. Involved in transcription antitermination. Required for transcription of ribosomal RNA (rRNA) genes. Binds specifically to the boxA antiterminator sequence of the ribosomal RNA (rrn) operons. The protein is Transcription antitermination protein NusB of Xylella fastidiosa (strain 9a5c).